The primary structure comprises 263 residues: Acyl-[acyl-carrier-protein]--UDP-N-acetylglucosamine O-acyltransferase (263 aa).

Belongs to the transferase hexapeptide repeat family. LpxA subfamily. As to quaternary structure, homotrimer.

The protein resides in the cytoplasm. The enzyme catalyses a (3R)-hydroxyacyl-[ACP] + UDP-N-acetyl-alpha-D-glucosamine = a UDP-3-O-[(3R)-3-hydroxyacyl]-N-acetyl-alpha-D-glucosamine + holo-[ACP]. Its pathway is glycolipid biosynthesis; lipid IV(A) biosynthesis; lipid IV(A) from (3R)-3-hydroxytetradecanoyl-[acyl-carrier-protein] and UDP-N-acetyl-alpha-D-glucosamine: step 1/6. In terms of biological role, involved in the biosynthesis of lipid A, a phosphorylated glycolipid that anchors the lipopolysaccharide to the outer membrane of the cell. This is Acyl-[acyl-carrier-protein]--UDP-N-acetylglucosamine O-acyltransferase from Campylobacter jejuni subsp. jejuni serotype O:2 (strain ATCC 700819 / NCTC 11168).